The sequence spans 218 residues: Adenylate kinase (218 aa).

Residue 14–19 (GAGKGT) coordinates ATP. The segment at 34-63 (STGDMFRAAIKAGTELGKQAKALMDEGKLV) is NMP. AMP-binding positions include Thr35, Arg40, 61–63 (KLV), 89–92 (GFPR), and Gln96. The segment at 126-163 (GRRVHQASGRSYHIVYNPPKVEGKDDVTGEDLIIRADD) is LID. Residues Arg127 and 136-137 (SY) contribute to the ATP site. Arg160 and Arg171 together coordinate AMP. Lys204 contacts ATP.

This sequence belongs to the adenylate kinase family. As to quaternary structure, monomer.

It is found in the cytoplasm. It carries out the reaction AMP + ATP = 2 ADP. The protein operates within purine metabolism; AMP biosynthesis via salvage pathway; AMP from ADP: step 1/1. Catalyzes the reversible transfer of the terminal phosphate group between ATP and AMP. Plays an important role in cellular energy homeostasis and in adenine nucleotide metabolism. This is Adenylate kinase from Mannheimia succiniciproducens (strain KCTC 0769BP / MBEL55E).